Here is a 296-residue protein sequence, read N- to C-terminus: Phosphoribosylaminoimidazole-succinocarboxamide synthase (296 aa).

The protein belongs to the SAICAR synthetase family.

It catalyses the reaction 5-amino-1-(5-phospho-D-ribosyl)imidazole-4-carboxylate + L-aspartate + ATP = (2S)-2-[5-amino-1-(5-phospho-beta-D-ribosyl)imidazole-4-carboxamido]succinate + ADP + phosphate + 2 H(+). The protein operates within purine metabolism; IMP biosynthesis via de novo pathway; 5-amino-1-(5-phospho-D-ribosyl)imidazole-4-carboxamide from 5-amino-1-(5-phospho-D-ribosyl)imidazole-4-carboxylate: step 1/2. In Desulfotalea psychrophila (strain LSv54 / DSM 12343), this protein is Phosphoribosylaminoimidazole-succinocarboxamide synthase.